Reading from the N-terminus, the 270-residue chain is Tryptophan synthase alpha chain (270 aa).

Active-site proton acceptor residues include Glu51 and Asp62.

Belongs to the TrpA family. Tetramer of two alpha and two beta chains.

The enzyme catalyses (1S,2R)-1-C-(indol-3-yl)glycerol 3-phosphate + L-serine = D-glyceraldehyde 3-phosphate + L-tryptophan + H2O. The protein operates within amino-acid biosynthesis; L-tryptophan biosynthesis; L-tryptophan from chorismate: step 5/5. Functionally, the alpha subunit is responsible for the aldol cleavage of indoleglycerol phosphate to indole and glyceraldehyde 3-phosphate. In Methanothermobacter thermautotrophicus (strain ATCC 29096 / DSM 1053 / JCM 10044 / NBRC 100330 / Delta H) (Methanobacterium thermoautotrophicum), this protein is Tryptophan synthase alpha chain.